Consider the following 106-residue polypeptide: MTYIIYAFAAVFEIGGCFAFWAWLKLGKPVWWLAPGMVSLALFAWLLTLVPSEAAGRTFAAYGGIYIAASLLWLWLVENRVPDRYDIGGALVCLAGTSIILFGPRG.

The next 4 membrane-spanning stretches (helical) occupy residues 4 to 24, 30 to 50, 58 to 78, and 86 to 106; these read IIYAFAAVFEIGGCFAFWAWL, VWWLAPGMVSLALFAWLLTLV, TFAAYGGIYIAASLLWLWLVE, and DIGGALVCLAGTSIILFGPRG.

Belongs to the UPF0060 family.

The protein localises to the cell inner membrane. The polypeptide is UPF0060 membrane protein Rleg2_1018 (Rhizobium leguminosarum bv. trifolii (strain WSM2304)).